A 180-amino-acid chain; its full sequence is Regulator of G-protein signaling 8 (180 aa).

Ser26 is modified (phosphoserine). Residues 56 to 171 (SFDVLLSHKY…FLRSKMYLDL (116 aa)) enclose the RGS domain.

Interacts with GNAO1 and GNAI3.

The protein resides in the cell membrane. It is found in the membrane. The protein localises to the perikaryon. Its subcellular location is the cell projection. It localises to the dendrite. The protein resides in the nucleus. Regulates G protein-coupled receptor signaling cascades, including signaling via muscarinic acetylcholine receptor CHRM2 and dopamine receptor DRD2. Inhibits signal transduction by increasing the GTPase activity of G protein alpha subunits, thereby driving them into their inactive GDP-bound form. Modulates the activity of potassium channels that are activated in response to DRD2 and CHRM2 signaling. This Mus musculus (Mouse) protein is Regulator of G-protein signaling 8 (Rgs8).